We begin with the raw amino-acid sequence, 67 residues long: Metallothionein-B (67 aa).

This sequence belongs to the metallothionein superfamily. Type 4 family.

In terms of biological role, metallothioneins have a high content of cysteine residues that bind various heavy metals. The protein is Metallothionein-B of Sphaerechinus granularis (Purple sea urchin).